The sequence spans 1430 residues: Death-associated protein kinase 1 (1430 aa).

Residues 13–275 (YDTGEELGSG…IQDSLQHPWI (263 aa)) form the Protein kinase domain. Residues 19–27 (LGSGQFAVV), Lys42, 94–96 (ELV), and Glu100 contribute to the ATP site. The Proton acceptor role is filled by Asp139. Asp161 is a binding site for ATP. The segment at 267–334 (QDSLQHPWIK…RSNMSVARSD (68 aa)) is calmodulin-binding. At Ser289 the chain carries Phosphoserine; by RPS6KA1 and RPS6KA3. The tract at residues 292–301 (NMEKFKKFAA) is autoinhibitory domain. Ser308 carries the post-translational modification Phosphoserine; by autocatalysis. Phosphoserine occurs at positions 319 and 333. ANK repeat units lie at residues 378 to 407 (HGTPPLLIAAGCGNIQILQLLIKRGSRIDV), 411 to 440 (GGSNAVYWAARHGHVDTLKFLSENKCPLDV), 444 to 473 (SGEMALHVAARYGHADVAQLLCSFGSNPNI), 477 to 506 (EEETPLHCAAWHGYYSVAKALCEAGCNVNI), 510 to 539 (EGETPLLTASARGYHDIVECLAEHGADLNA), 543 to 572 (DGHIALHLAVRRCQMEVIKTLLSQGCFVDY), 576 to 605 (HGNTPLHVACKDGNMPIVVALCEANCNLDI), and 609 to 638 (YGRTPLHLAANNGILDVVRYLCLMGASVEA). Residues 681–955 (TQNLQPRIKL…NHLQEIRSQI (275 aa)) enclose the Roc domain. The residue at position 734 (Ser734) is a Phosphoserine; by MAPK1. The ANK 9 repeat unit spans residues 875-904 (KLKNPLQVVLVATHADIMNVPRPAGGEFGY). Ser1115 carries the phosphoserine modification. Residues 1162–1196 (EGDADIRLWVNGCKLANRGAELLVLLVNHGQGIEV) form an ANK 10 repeat. A Death domain is found at 1312-1396 (KLSRLLDPPD…DAADFLLKAS (85 aa)).

It belongs to the protein kinase superfamily. CAMK Ser/Thr protein kinase family. DAP kinase subfamily. Interacts with KLHL20. Interacts (via death domain) with MAPK1 and MAPK3. Interacts with MAP1B (via N-terminus). Interacts with PRKD1 in an oxidative stress-regulated manner. Interacts with PIN1, PDCD6, BECN1, TSC2 and STX1A. Interacts (via kinase domain) with DAPK3 (via kinase domain). Interacts with GRINB. Interacts (via death domain) with UNC5B (via death domain). Interacts with UNC5C (via death domain). Requires Mg(2+) as cofactor. Ubiquitinated by the BCR(KLHL20) E3 ubiquitin ligase complex, leading to its degradation by the proteasome. Post-translationally, removal of the C-terminal tail of isoform 2 (corresponding to amino acids 296-337 of isoform 2) by proteolytic cleavage stimulates maximally its membrane-blebbing function. In terms of processing, in response to mitogenic stimulation (PMA or EGF), phosphorylated at Ser-289; phosphorylation suppresses DAPK1 pro-apoptotic function. Autophosphorylation at Ser-308 inhibits its catalytic activity. Phosphorylation at Ser-734 by MAPK1 increases its catalytic activity and promotes cytoplasmic retention of MAPK1. Endoplasmic-stress can cause dephosphorylation at Ser-308. Isoform 2 is expressed in normal intestinal tissue as well as in colorectal carcinomas.

Its subcellular location is the cytoplasm. The protein resides in the cytoskeleton. The catalysed reaction is L-seryl-[protein] + ATP = O-phospho-L-seryl-[protein] + ADP + H(+). It catalyses the reaction L-threonyl-[protein] + ATP = O-phospho-L-threonyl-[protein] + ADP + H(+). With respect to regulation, activated by Ca(2+)/calmodulin. Regulated by a locking mechanism, involving autophosphorylation at Ser-308 and calmodulin binding. In the inactive state, Ser-308 is phosphorylated. Activation involves its dephosphorylation and a release-of-autoinhibition mechanism where binding of calmodulin induces a conformational change that relieves the steric block of the active site by the autoinhibitory domain. Activity is modulated by UNC5B and NTN1. UNC5B activates it by inhibiting the phosphorylation at Ser-308, whereas NTN1 inhibits UNC5B-mediated activation of DAPK1. Endoplasmic-stress activates by causing Ser-308 dephosphorylation. Calcium/calmodulin-dependent serine/threonine kinase involved in multiple cellular signaling pathways that trigger cell survival, apoptosis, and autophagy. Regulates both type I apoptotic and type II autophagic cell deaths signal, depending on the cellular setting. The former is caspase-dependent, while the latter is caspase-independent and is characterized by the accumulation of autophagic vesicles. Phosphorylates PIN1 resulting in inhibition of its catalytic activity, nuclear localization, and cellular function. Phosphorylates TPM1, enhancing stress fiber formation in endothelial cells. Phosphorylates STX1A and significantly decreases its binding to STXBP1. Phosphorylates PRKD1 and regulates JNK signaling by binding and activating PRKD1 under oxidative stress. Phosphorylates BECN1, reducing its interaction with BCL2 and BCL2L1 and promoting the induction of autophagy. Phosphorylates TSC2, disrupting the TSC1-TSC2 complex and stimulating mTORC1 activity in a growth factor-dependent pathway. Phosphorylates RPS6, MYL9 and DAPK3. Acts as a signaling amplifier of NMDA receptors at extrasynaptic sites for mediating brain damage in stroke. Cerebral ischemia recruits DAPK1 into the NMDA receptor complex and it phosphorylates GRINB at Ser-1303 inducing injurious Ca(2+) influx through NMDA receptor channels, resulting in an irreversible neuronal death. Required together with DAPK3 for phosphorylation of RPL13A upon interferon-gamma activation which is causing RPL13A involvement in transcript-selective translation inhibition. Its function is as follows. Isoform 2 cannot induce apoptosis but can induce membrane blebbing. This chain is Death-associated protein kinase 1 (DAPK1), found in Homo sapiens (Human).